The primary structure comprises 496 residues: Thiamine transporter 2 (496 aa).

Topologically, residues 1-7 (MDCYRTS) are cytoplasmic. The chain crosses the membrane as a helical span at residues 8-28 (LSSSWIYPTVILCLFGFFSMM). Topologically, residues 29 to 53 (RPSEPFLIPYLSGPDKNLTSAEITN) are extracellular. An N-linked (GlcNAc...) asparagine glycan is attached at Asn45. The helical transmembrane segment at 54–74 (EIFPVWTYSYLVLLLPVFVLT) threads the bilayer. At 75 to 81 (DYVRYKP) the chain is on the cytoplasmic side. A helical membrane pass occupies residues 82 to 102 (VIILQGISFIITWLLLLFGQG). At 103–110 (VKTMQVVE) the chain is on the extracellular side. Residues 111–131 (FFYGMVTAAEVAYYAYIYSVV) traverse the membrane as a helical segment. The Cytoplasmic portion of the chain corresponds to 132–144 (SPEHYQRVSGYCR). Residues 145–165 (SVTLAAYTAGSVLAQLLVSLA) form a helical membrane-spanning segment. N-linked (GlcNAc...) asparagine glycosylation occurs at Asn166. Residues 166–169 (NMSY) lie on the Extracellular side of the membrane. A helical membrane pass occupies residues 170–190 (FYLNVISLASVSVAFLFSLFL). Topologically, residues 191-282 (PMPKKSMFFH…YSSKRLFYWS (92 aa)) are cytoplasmic. Residues 283–303 (LWWAFATAGFNQVLNYVQILW) form a helical membrane-spanning segment. The Extracellular segment spans residues 304–316 (DYKAPSQDSSIYN). Residues 317-337 (GAVEAIATFGGAVAAFAVGYV) form a helical membrane-spanning segment. Residues 338–342 (KVNWD) lie on the Cytoplasmic side of the membrane. A helical membrane pass occupies residues 343 to 363 (LLGELALVVFSVVNAGSLFLM). Residues 364–375 (HYTANIWACYAG) are Extracellular-facing. The chain crosses the membrane as a helical span at residues 376–396 (YLIFKSSYMLLITIAVFQIAV). Residues 397-405 (NLNVERYAL) are Cytoplasmic-facing. The helical transmembrane segment at 406-426 (VFGINTFIALVIQTIMTVIVV) threads the bilayer. Topologically, residues 427–434 (DQRGLNLP) are extracellular. Residues 435–455 (VSIQFLVYGSYFAVIAGIFLM) traverse the membrane as a helical segment. At 456–496 (RSMYITYSTKSQKDVQSPAPSENPDVSHPEEESNIIMSTKL) the chain is on the cytoplasmic side. A disordered region spans residues 468-496 (KDVQSPAPSENPDVSHPEEESNIIMSTKL).

Belongs to the reduced folate carrier (RFC) transporter (TC 2.A.48) family. In terms of tissue distribution, widely expressed but most abundant in placenta, kidney and liver.

It localises to the membrane. The catalysed reaction is thiamine(out) + H(+)(in) = thiamine(in) + H(+)(out). It carries out the reaction pyridoxine(out) + n H(+)(out) = pyridoxine(in) + n H(+)(in). Pyridoxine transport is inhibited by carbonyl cyanide p-trifluoromethoxyphenylhydrazone (FCCP) and carbonyl cyanide m-chlorophenylhydrazone (CCCP). Its function is as follows. Mediates high affinity thiamine uptake, probably via a proton anti-port mechanism. Has no folate transport activity. Mediates H(+)-dependent pyridoxine transport. The chain is Thiamine transporter 2 (SLC19A3) from Homo sapiens (Human).